The chain runs to 161 residues: Eukaryotic translation initiation factor 5A-1 (161 aa).

Hypusine is present on K54.

The protein belongs to the eIF-5A family. In terms of processing, lys-54 undergoes hypusination, a unique post-translational modification that consists in the addition of a butylamino group from spermidine to lysine side chain, leading to the formation of the unusual amino acid hypusine. eIF-5As are the only known proteins to undergo this modification, which is essential for their function. As to expression, expressed specifically in the germline in the distal region of gonads where germ cells actively proliferate.

The protein localises to the cytoplasm. Translation factor that promotes translation elongation and termination, particularly upon ribosome stalling at specific amino acid sequence contexts. Binds between the exit (E) and peptidyl (P) site of the ribosome and promotes rescue of stalled ribosome: specifically required for efficient translation of polyproline-containing peptides as well as other motifs that stall the ribosome. Acts as a ribosome quality control (RQC) cofactor by joining the RQC complex to facilitate peptidyl transfer during CAT tailing step. Required for mitotic germ cell proliferation, gametogenesis after entry into meiosis, and localization of the P granule component pgl-1 on P granules. The protein is Eukaryotic translation initiation factor 5A-1 (iff-1) of Caenorhabditis elegans.